The primary structure comprises 348 residues: Maintenance of mitochondrial morphology protein 1 (348 aa).

Residues 1–35 lie on the Lumenal side of the membrane; the sequence is MAGKADLGHTGISDNIVERQIFVPQPNNAWSFTQG. A helical membrane pass occupies residues 36 to 56; that stretch reads LMCGQASVVVVLLVFIKFFVF. Over 57–348 the chain is Cytoplasmic; the sequence is SEAPPSSGAA…GKTEKVNGNE (292 aa). Residues 114-323 form the SMP-LTD domain; sequence NPESLDWFNV…EPKFQVVRLP (210 aa). The interval 328–348 is disordered; the sequence is RSKNTREPVGAGKTEKVNGNE.

The protein belongs to the MMM1 family. Homodimer. Component of the ER-mitochondria encounter structure (ERMES) or MDM complex, composed of MMM1, MDM10, MDM12 and MDM34. An MMM1 homodimer associates with one molecule of MDM12 on each side in a pairwise head-to-tail manner, and the SMP-LTD domains of MMM1 and MDM12 generate a continuous hydrophobic tunnel for phospholipid trafficking.

Its subcellular location is the endoplasmic reticulum membrane. In terms of biological role, component of the ERMES/MDM complex, which serves as a molecular tether to connect the endoplasmic reticulum (ER) and mitochondria. Components of this complex are involved in the control of mitochondrial shape and protein biogenesis, and function in nonvesicular lipid trafficking between the ER and mitochondria. The MDM12-MMM1 subcomplex functions in the major beta-barrel assembly pathway that is responsible for biogenesis of all outer membrane beta-barrel proteins, and acts in a late step after the SAM complex. The MDM10-MDM12-MMM1 subcomplex further acts in the TOM40-specific pathway after the action of the MDM12-MMM1 complex. Essential for establishing and maintaining the structure of mitochondria and maintenance of mtDNA nucleoids. This is Maintenance of mitochondrial morphology protein 1 from Clavispora lusitaniae (strain ATCC 42720) (Yeast).